The sequence spans 37 residues: Large ribosomal subunit protein bL36c (37 aa).

This sequence belongs to the bacterial ribosomal protein bL36 family.

Its subcellular location is the plastid. The protein resides in the chloroplast. This chain is Large ribosomal subunit protein bL36c, found in Tetradesmus obliquus (Green alga).